The sequence spans 64 residues: Alpha-conotoxin-like Ai1.2 (64 aa).

The first 17 residues, 1 to 17 (MFTVFLLVVLATTVVSS), serve as a signal peptide directing secretion. A propeptide spanning residues 18 to 43 (TSGRRAFRGRNAAAKASGLVGLTDRR) is cleaved from the precursor. 2 disulfide bridges follow: cysteine 46/cysteine 52 and cysteine 47/cysteine 60. The ser-Xaa-Pro motif, crucial for potent interaction with nAChR stretch occupies residues 48–50 (SDP). Glycine amide is present on glycine 61.

Belongs to the conotoxin A superfamily. As to expression, expressed by the venom duct.

Its subcellular location is the secreted. Alpha-conotoxins act on postsynaptic membranes, they bind to the nicotinic acetylcholine receptors (nAChR) and thus inhibit them. This chain is Alpha-conotoxin-like Ai1.2, found in Conus ammiralis (Admiral cone).